Here is a 565-residue protein sequence, read N- to C-terminus: Proline--tRNA ligase (565 aa).

It belongs to the class-II aminoacyl-tRNA synthetase family. ProS type 1 subfamily. In terms of assembly, homodimer.

Its subcellular location is the cytoplasm. The enzyme catalyses tRNA(Pro) + L-proline + ATP = L-prolyl-tRNA(Pro) + AMP + diphosphate. In terms of biological role, catalyzes the attachment of proline to tRNA(Pro) in a two-step reaction: proline is first activated by ATP to form Pro-AMP and then transferred to the acceptor end of tRNA(Pro). As ProRS can inadvertently accommodate and process non-cognate amino acids such as alanine and cysteine, to avoid such errors it has two additional distinct editing activities against alanine. One activity is designated as 'pretransfer' editing and involves the tRNA(Pro)-independent hydrolysis of activated Ala-AMP. The other activity is designated 'posttransfer' editing and involves deacylation of mischarged Ala-tRNA(Pro). The misacylated Cys-tRNA(Pro) is not edited by ProRS. In Campylobacter lari (strain RM2100 / D67 / ATCC BAA-1060), this protein is Proline--tRNA ligase.